The chain runs to 218 residues: Cytochrome b6 (218 aa).

Residues 35 to 55 traverse the membrane as a helical segment; that stretch reads IFYCLGGITLVCFLIQFATGF. C38 serves as a coordination point for heme c. Heme b contacts are provided by H89 and H103. Transmembrane regions (helical) follow at residues 93 to 113, 119 to 139, and 189 to 209; these read ASMM…TGGF, LTWV…VTGY, and LHTF…FLMI. The heme b site is built by H190 and H205.

It belongs to the cytochrome b family. PetB subfamily. As to quaternary structure, the 4 large subunits of the cytochrome b6-f complex are cytochrome b6, subunit IV (17 kDa polypeptide, PetD), cytochrome f and the Rieske protein, while the 4 small subunits are PetG, PetL, PetM and PetN. The complex functions as a dimer. The cofactor is heme b. Requires heme c as cofactor.

It is found in the cellular thylakoid membrane. Functionally, component of the cytochrome b6-f complex, which mediates electron transfer between photosystem II (PSII) and photosystem I (PSI), cyclic electron flow around PSI, and state transitions. This is Cytochrome b6 from Prochlorococcus marinus (strain MIT 9215).